The primary structure comprises 498 residues: ATP synthase subunit beta, chloroplastic (498 aa).

172 to 179 lines the ATP pocket; sequence GGAGVGKT.

Belongs to the ATPase alpha/beta chains family. In terms of assembly, F-type ATPases have 2 components, CF(1) - the catalytic core - and CF(0) - the membrane proton channel. CF(1) has five subunits: alpha(3), beta(3), gamma(1), delta(1), epsilon(1). CF(0) has four main subunits: a(1), b(1), b'(1) and c(9-12).

The protein localises to the plastid. It localises to the chloroplast thylakoid membrane. The catalysed reaction is ATP + H2O + 4 H(+)(in) = ADP + phosphate + 5 H(+)(out). In terms of biological role, produces ATP from ADP in the presence of a proton gradient across the membrane. The catalytic sites are hosted primarily by the beta subunits. In Whiteheadia bifolia (Elephants ears), this protein is ATP synthase subunit beta, chloroplastic.